Consider the following 571-residue polypeptide: MSTNTTHTSCPKESREDRAFQKTYAEGTLWPVKVGMQTLNLSGTYSCNGVPFSSLPLYDTSGPHSDPSLQVNPAEGLAPVRDSWNFIKSISVPCAAPVNTESMTERHPRMAEDGIALTQMHFARKGVITPEMEYVAIRENQQLEEWIRANGRGGTPSEPITAEFVMSEVAAGRAIIPANINHPELEPMIIGRNFRVKINANIGNSALSSSIAEEVEKAVWACRWGADTVMDLSTGANIHKTREWILRNSPVPIGTVPIYQALEKVNGVAENLTWELYRDTLLEQAEQGVDYFTIHAGILEKHLPLADKRRTGIVSRGGSIMAKWCRANKQENFLYTHFEEICAILKCYDIAVSLGDALRPGSISDANDEAQFGELKVLGELTTLAWKHEVQVMIEGPGHVPLNMIEENMQKQLEYCHEAPFYTLGPLVTDIAAGYDHVNSAIGGTLIASYGCSMLCYVTPKEHLGLPDRNDVREGVVVHKIAAHAADLAKGSPIARLRDELMSSARFAFNWEDQFNLSLDPPKTREVHAASMKAAGHEGEKADFCTMCGPDFCSMKKSKEASAASAIEPGR.

Substrate-binding positions include Asn201, Met230, Tyr259, His295, 315–317 (SRG), 356–359 (DALR), and Glu395. His399 contributes to the Zn(2+) binding site. Tyr422 serves as a coordination point for substrate. His463 lines the Zn(2+) pocket. Residues Cys545, Cys548, and Cys553 each contribute to the [4Fe-4S] cluster site.

This sequence belongs to the ThiC family. Requires [4Fe-4S] cluster as cofactor.

The catalysed reaction is 5-amino-1-(5-phospho-beta-D-ribosyl)imidazole + S-adenosyl-L-methionine = 4-amino-2-methyl-5-(phosphooxymethyl)pyrimidine + CO + 5'-deoxyadenosine + formate + L-methionine + 3 H(+). It functions in the pathway cofactor biosynthesis; thiamine diphosphate biosynthesis. Catalyzes the synthesis of the hydroxymethylpyrimidine phosphate (HMP-P) moiety of thiamine from aminoimidazole ribotide (AIR) in a radical S-adenosyl-L-methionine (SAM)-dependent reaction. The sequence is that of Phosphomethylpyrimidine synthase from Chlorobium phaeovibrioides (strain DSM 265 / 1930) (Prosthecochloris vibrioformis (strain DSM 265)).